The chain runs to 481 residues: uncharacterized protein (481 aa).

Belongs to the UbiD family.

This is an uncharacterized protein from Archaeoglobus fulgidus (strain ATCC 49558 / DSM 4304 / JCM 9628 / NBRC 100126 / VC-16).